A 373-amino-acid chain; its full sequence is LIM domain-binding protein 1 (373 aa).

Disordered regions lie at residues 248-297 and 329-373; these read PPAE…LSSQ and DAAN…QASQ. Over residues 266 to 282 the composition is skewed to low complexity; the sequence is SGGSTMSSGGGNTNNSN. The segment covering 288 to 297 has biased composition (polar residues); it reads PASTFALSSQ. An LIM interaction domain (LID) domain is found at 298–337; sequence DVMVVGEPTLMGGEFGDEDERLITRLENTQFDAANGIDDE.

This sequence belongs to the LDB family. Forms homodimers and heterodimers. Interacts with and activates lhx1/lim1. The stoichiometry of lhx1/lim1 and ldb1 is important for their function and an excess of ldb1 can inhibit lhx1/lim1 function. When bound to lhx1/lim1, escapes degradation by rnf12. Interacts with the N-terminal region of rnf12. In terms of processing, undergoes rnf12-mediated ubiquitin-proteasome-dependent degradation.

It localises to the nucleus. In terms of biological role, binds to the LIM domain of a wide variety of LIM domain-containing transcription factors. Acts as a coactivator together with otx2 to stimulate lhx1/lim1-mediated activation of the gsc promoter in the Spemann organizer. Acts synergistically with lhx1/lim1 and ssbp in axis formation. The polypeptide is LIM domain-binding protein 1 (Xenopus tropicalis (Western clawed frog)).